The primary structure comprises 1009 residues: Putative receptor-like protein 8 (1009 aa).

A signal peptide spans 1 to 22 (MKTNFVILLLLLCVFAISPSQQ). Residues 23-961 (EEINQHNPGI…EEDDEAPVDM (939 aa)) are Extracellular-facing. Residues Asn-159 and Asn-197 are each glycosylated (N-linked (GlcNAc...) asparagine). Residues 204-231 (FEEVRSLELSAGLNGFVDNVEGYKSLRK) form an LRR 1; degenerate repeat. LRR repeat units lie at residues 232-255 (LKNL…PFIN), 257-281 (ATSL…EIKD), 282-305 (LTNL…LTHL), 306-329 (KKLK…VVCE), 331-354 (KNLW…LGRL), 355-377 (NKLR…TFNR), 379-402 (ESLE…PLAN), 404-427 (TKLK…SEPK), 442-465 (LEKI…ATIV), 466-490 (HELQ…GYAL), 492-514 (NLLR…MGEM), 515-538 (VNIT…FVTG), 540-565 (FSLK…SFTS), 567-587 (EELR…LLSS), 588-612 (NTTL…MSNL), 613-636 (SGLT…LLAI), 638-660 (FLSL…VGGE), 662-681 (GIKL…DTLL), 682-705 (EKVQ…VNTE), 707-728 (IYIL…LCDL), 729-752 (RNIR…LYNL), 819-842 (LDYM…ELGS), 843-866 (LSKL…SFSN), 867-891 (LKDI…LTNL), and 893-916 (SLVV…QFNT). Asn-267 carries N-linked (GlcNAc...) asparagine glycosylation. Residues Asn-390 and Asn-402 are each glycosylated (N-linked (GlcNAc...) asparagine). Residues Asn-497, Asn-516, Asn-526, and Asn-551 are each glycosylated (N-linked (GlcNAc...) asparagine). N-linked (GlcNAc...) asparagine glycosylation is found at Asn-588 and Asn-611. Asn-716 and Asn-751 each carry an N-linked (GlcNAc...) asparagine glycan. Residues Asn-850, Asn-890, Asn-903, and Asn-934 are each glycosylated (N-linked (GlcNAc...) asparagine). The interval 934-955 (NRSCDAKKTSDESENGGEEEDD) is disordered. The span at 945–955 (ESENGGEEEDD) shows a compositional bias: acidic residues. The helical transmembrane segment at 962–982 (LAFYFSSASTYVTTLIGIFIL) threads the bilayer. Over 983–1009 (MCFDCPLRRAWLRIVDASIASVKSMLP) the chain is Cytoplasmic.

This sequence belongs to the RLP family.

It localises to the cell membrane. In Arabidopsis thaliana (Mouse-ear cress), this protein is Putative receptor-like protein 8.